Reading from the N-terminus, the 448-residue chain is Homogentisate 1,2-dioxygenase (448 aa).

Histidine 303 serves as the catalytic Proton acceptor. 2 residues coordinate Fe cation: histidine 346 and glutamate 352. The homogentisate site is built by tyrosine 361 and histidine 382. Histidine 382 contacts Fe cation.

The protein belongs to the homogentisate dioxygenase family. Hexamer; dimer of trimers. The cofactor is Fe cation.

The catalysed reaction is homogentisate + O2 = 4-maleylacetoacetate + H(+). The protein operates within amino-acid degradation; L-phenylalanine degradation; acetoacetate and fumarate from L-phenylalanine: step 4/6. Functionally, involved in the catabolism of homogentisate (2,5-dihydroxyphenylacetate or 2,5-OH-PhAc), a central intermediate in the degradation of phenylalanine and tyrosine. Catalyzes the oxidative ring cleavage of the aromatic ring of homogentisate to yield maleylacetoacetate. The chain is Homogentisate 1,2-dioxygenase from Rhodopseudomonas palustris (strain BisB18).